A 1438-amino-acid polypeptide reads, in one-letter code: Lysophospholipase NTE1 (1438 aa).

Residues 1-25 (MDSDTSSADFHSTETLVSTPKYSYG) lie on the Cytoplasmic side of the membrane. The helical transmembrane segment at 26–46 (VLINVILLVSWTCFRVVNWFL) threads the bilayer. Topologically, residues 47–64 (VTLPSILLGMLSKTFQIT) are lumenal. The helical transmembrane segment at 65–85 (LSLSSILMFVVAVTAICFLVV) threads the bilayer. Residues 86-1438 (RYKYLTRYSR…HVSLSRRNSI (1353 aa)) lie on the Cytoplasmic side of the membrane. Residues 432-450 (YETQTIPNESEDSPTIQRS) are compositionally biased toward polar residues. Residues 432 to 464 (YETQTIPNESEDSPTIQRSSLRRRASHSTSLRK) form a disordered region. Residues 590 to 720 (GDDS…LTID) and 707 to 856 (RLKR…VANR) contribute to the a nucleoside 3',5'-cyclic phosphate site. A PNPLA domain is found at 1131-1295 (LVLGGGGSRG…LDNLPVSEMK (165 aa)). Residues 1135–1140 (GGGSRG) carry the GXGXXG motif. The GXSXG motif lies at 1162–1166 (GTSIG). Ser1164 acts as the Nucleophile in catalysis. The active-site Proton acceptor is the Asp1282. The DGA/G signature appears at 1282–1284 (DGG).

This sequence belongs to the NTE family.

The protein resides in the endoplasmic reticulum membrane. The catalysed reaction is a 1-acyl-sn-glycero-3-phosphocholine + H2O = sn-glycerol 3-phosphocholine + a fatty acid + H(+). Its activity is regulated as follows. Inhibited by organophosphorus esters. Intracellular phospholipase B that catalyzes the double deacylation of phosphatidylcholine (PC) to glycerophosphocholine (GroPCho). Plays an important role in membrane lipid homeostasis. Responsible for the rapid PC turnover in response to inositol, elevated temperatures, or when choline is present in the growth medium. In Meyerozyma guilliermondii (strain ATCC 6260 / CBS 566 / DSM 6381 / JCM 1539 / NBRC 10279 / NRRL Y-324) (Yeast), this protein is Lysophospholipase NTE1 (NTE1).